A 558-amino-acid polypeptide reads, in one-letter code: MRIVEQIKSEIRQALADAVSRAVAAGALVGPAPEVFLETPKAREHGDFATNLAMVMARQEKKAPRVIAQAIVDHLQTEGTWIESAEIAGPGFINLRLRQGWVHQVLPAIQAEGADYGKSDHGGKQRILLEYVSANPTGPMVLVQARAGAFGSSLARLLNWAGYECHTEFYVNDAGNQVKILARTVDLRAQELRGATVEIPEGYYPGEDVIDCARALLEQYPDFLEKPEEERLAFLERWAPEYFRSGHERVLRSYGVEFDRWFSERSLREAGAPARLVEWLKERGEAYEKDGAVWMRTTAYGDDKDRVLVKSDGEYTYFAADACYHKDKYDRGYATLIDILGQDHHGYLGRMKAMVECLGHPRDSLEILFTQMVRLFKDGQEFRMSKRRGNYVTLEDLLEQVSVDAARYFFLMRSLDTHMDFDLDLANLKSSDNPVFYVQYAHARICSILRQAREQGLEVPAASEVDTALLADESEVELMRKLAEFPEEIIGAADAREVHRIPRYLNELATLFHQFYSRCRVVSDDVPLSRARLLLVDCTRTVLANALGILGVSAPERM.

Positions 134–144 (ANPTGPMVLVQ) match the 'HIGH' region motif.

Belongs to the class-I aminoacyl-tRNA synthetase family. As to quaternary structure, monomer.

It is found in the cytoplasm. It carries out the reaction tRNA(Arg) + L-arginine + ATP = L-arginyl-tRNA(Arg) + AMP + diphosphate. The chain is Arginine--tRNA ligase from Symbiobacterium thermophilum (strain DSM 24528 / JCM 14929 / IAM 14863 / T).